Consider the following 389-residue polypeptide: Phospho-N-acetylmuramoyl-pentapeptide-transferase (389 aa).

A run of 10 helical transmembrane segments spans residues 21–41 (FITFRAVFATLTALAIGLFFG), 70–90 (GTPTMGGALILLAIGVATLLW), 97–117 (FVWVVLIVTLGFGAVGWVDDY), 134–154 (YMWQSIIGLFAAVYLAFSVSA), 189–209 (TISYPLGVWGFIALTYFVIVG), 222–242 (GLAIMPTVMVGTALGLFAYLT), 259–279 (AGELIIFCGAMAGAGLAFLWF), 286–306 (VFMGDVGALALGGALGTIAVI), 311–331 (IVLFIMGGVFVVETLSVMIQV), and 366–386 (QVVVRFWIITMMLVLFGLSTL).

Belongs to the glycosyltransferase 4 family. MraY subfamily. It depends on Mg(2+) as a cofactor.

It is found in the cell inner membrane. The catalysed reaction is UDP-N-acetyl-alpha-D-muramoyl-L-alanyl-gamma-D-glutamyl-meso-2,6-diaminopimeloyl-D-alanyl-D-alanine + di-trans,octa-cis-undecaprenyl phosphate = di-trans,octa-cis-undecaprenyl diphospho-N-acetyl-alpha-D-muramoyl-L-alanyl-D-glutamyl-meso-2,6-diaminopimeloyl-D-alanyl-D-alanine + UMP. Its pathway is cell wall biogenesis; peptidoglycan biosynthesis. Its function is as follows. Catalyzes the initial step of the lipid cycle reactions in the biosynthesis of the cell wall peptidoglycan: transfers peptidoglycan precursor phospho-MurNAc-pentapeptide from UDP-MurNAc-pentapeptide onto the lipid carrier undecaprenyl phosphate, yielding undecaprenyl-pyrophosphoryl-MurNAc-pentapeptide, known as lipid I. The chain is Phospho-N-acetylmuramoyl-pentapeptide-transferase from Herminiimonas arsenicoxydans.